Here is a 524-residue protein sequence, read N- to C-terminus: 11-oxo-beta-amyrin 30-oxidase (524 aa).

Residues 9-29 (GTTVIISVLSVLLAVIPWYLL) form a helical membrane-spanning segment. Residue Cys-472 coordinates heme.

This sequence belongs to the cytochrome P450 family. Requires heme as cofactor. In terms of tissue distribution, expressed in flowers. Detected in roots upon salt treatment.

It is found in the membrane. It carries out the reaction 11-oxo-beta-amyrin + 3 reduced [NADPH--hemoprotein reductase] + 3 O2 = glycyrrhetinate + 3 oxidized [NADPH--hemoprotein reductase] + 4 H2O + 4 H(+). Its function is as follows. Involved in the biosynthesis of triterpenoid saponins. Catalyzes three sequential oxidation steps at C-30 of 11-oxo-beta-amyrin. Also able to catalyze sequential C-30 hydroxylation of beta-amyrin to produce 30-hydroxy-beta-amyrin and 11-deoxoglycyrrhetinic acid. This is 11-oxo-beta-amyrin 30-oxidase (CYP72A63) from Medicago truncatula (Barrel medic).